The following is a 455-amino-acid chain: Tubulin alpha-1 chain (455 aa).

8 residues coordinate GTP: Gln11, Glu75, Ser144, Gly148, Thr149, Thr183, Asn210, and Asn232. Glu75 provides a ligand contact to Mg(2+). Glu258 is an active-site residue.

Belongs to the tubulin family. Dimer of alpha and beta chains. A typical microtubule is a hollow water-filled tube with an outer diameter of 25 nm and an inner diameter of 15 nM. Alpha-beta heterodimers associate head-to-tail to form protofilaments running lengthwise along the microtubule wall with the beta-tubulin subunit facing the microtubule plus end conferring a structural polarity. Microtubules usually have 13 protofilaments but different protofilament numbers can be found in some organisms and specialized cells. The cofactor is Mg(2+).

The protein localises to the cytoplasm. It is found in the cytoskeleton. The enzyme catalyses GTP + H2O = GDP + phosphate + H(+). Functionally, tubulin is the major constituent of microtubules, a cylinder consisting of laterally associated linear protofilaments composed of alpha- and beta-tubulin heterodimers. Microtubules grow by the addition of GTP-tubulin dimers to the microtubule end, where a stabilizing cap forms. Below the cap, tubulin dimers are in GDP-bound state, owing to GTPase activity of alpha-tubulin. The chain is Tubulin alpha-1 chain (nda2) from Schizosaccharomyces pombe (strain 972 / ATCC 24843) (Fission yeast).